The chain runs to 219 residues: Exosomal polycystin-1-interacting protein (219 aa).

A signal peptide spans Met1 to Ala19. Residues Asn29, Asn42, Asn95, Asn188, and Asn210 are each glycosylated (N-linked (GlcNAc...) asparagine).

The protein belongs to the EPCIP family. As to quaternary structure, homooligomer. Interacts with PKD1 (via the PKD repeats in the N-terminal extracellular region); the interaction is not dependent on N-glycosylation of either protein. Post-translationally, N-glycosylated. As to expression, detected in the kidney and in the endothelium of large blood vessels (at protein level).

The protein localises to the vesicle. It localises to the secreted. Its subcellular location is the extracellular exosome. Functionally, likely to be involved with PKD1 in the detection, sequestration and exocytosis of senescent mitochondria. This chain is Exosomal polycystin-1-interacting protein, found in Homo sapiens (Human).